A 332-amino-acid chain; its full sequence is C4-dicarboxylate-binding periplasmic protein DctP (332 aa).

The first 22 residues, 1–22 (MFKPLTLIAASILAVTSFNAAA), serve as a signal peptide directing secretion.

It belongs to the bacterial solute-binding protein 7 family. In terms of assembly, the complex comprises the extracytoplasmic solute receptor protein DctP, and the two transmembrane proteins DctQ and DctM.

It localises to the periplasm. Part of the tripartite ATP-independent periplasmic (TRAP) transport system DctPQM involved in C4-dicarboxylates uptake. The protein is C4-dicarboxylate-binding periplasmic protein DctP of Vibrio cholerae serotype O1 (strain ATCC 39315 / El Tor Inaba N16961).